A 397-amino-acid chain; its full sequence is Enoyl-[acyl-carrier-protein] reductase [NADH] (397 aa).

Residues 48 to 53, 74 to 75, 111 to 112, and 139 to 140 each bind NAD(+); these read GASTGY, FE, DA, and LA. Residue Y224 coordinates substrate. Y234 serves as the catalytic Proton donor. NAD(+)-binding positions include K243 and 272–274; that span reads VVT.

It belongs to the TER reductase family. In terms of assembly, monomer.

It catalyses the reaction a 2,3-saturated acyl-[ACP] + NAD(+) = a (2E)-enoyl-[ACP] + NADH + H(+). It participates in lipid metabolism; fatty acid biosynthesis. Its function is as follows. Involved in the final reduction of the elongation cycle of fatty acid synthesis (FAS II). Catalyzes the reduction of a carbon-carbon double bond in an enoyl moiety that is covalently linked to an acyl carrier protein (ACP). The sequence is that of Enoyl-[acyl-carrier-protein] reductase [NADH] from Pseudomonas fluorescens (strain SBW25).